The sequence spans 1171 residues: MSLTVYMNHGQIDMRHALLSHAHEALNQDNNLTVYYIVPNHVKFDSEVDVLRRFARLTGQNPDTSLYAQSRLQVYSLSRLTWALLKDMATMQPNVIQGTGLFIMVSDILRDYAAQLPIFARMQSKAGFVTTLVAQLVELRASRISPEDLLTILNQESDDDTFLRQTLSGKLRDLAIVADALDKKMGHTYITQQEVLSFFATQLATTQLKNVAFYFDGFNGFTSPETQVMIELMARYPVTVALLGDVEKLGSQQPGDLFYKPMTTAQRLAQFTKIANQQVVWQVPTQARCLDESIISVMSAWEKLGEYRQFNSENKKTNLAAFVAENTMVEIQEVARRIRQLLVAQPDLRLRDILILARDLTPYTGHIPEVMQQFDLPYFLDTDQKMTNHPLVELLLNLLRPAKERFQYQQVMAILKTGLLRPYTDGSLVPEGDFFDIVSYLDNYLYANQPFERTWRDLDHPFTLFTVSEDEDDEDARVVLDDKTVNRRIETLRRFVIDAFDSLQQQLNQAQTMRQAATLIILWLEKYHVTEAILSQRDTLLAAGELSRSREGEEVWEMMTQTLDDIVAIDGDERFELEKFKAILVAGFEGATFSGIPNNLDQLTISEAGIVQSNDYQYLFFIGGTRNNLPAQLKSRALINDAERLIVQPALQENSTPKYLQNTAQQQMAEENLLFYGALTAATKNIVLSYPALDAGGQISDMSPFFKRLVDAFNITVNKVTATPATSQALLKYYVGSVRSTLGELVKIAASQQQTSAYQALRNTINQSEPERLERVLSAPNYKNQTETLKPELVQALFGETLNMSISQLESYYNNPLAYFLQYGLALKERLTNRLNVAQTGTLYHAVFEGVVQQLIIQQLSLRDISQKALQQLVADNMAEITAQPAYQMLQETGKMRATQHYLAKVSEILAVNMQRAARVNHAQPKAVERLFGFPNRQSLPALVVSTPQATVHLRGKIDRLDSQDPSQVYGTIIDYKSNGKHFDWGQAYDGRQMQLLTYWQAAQLSAEQLGIEAIGGAFFAKIAPEKLTIKDFKGDVRAMLRGEIKPEQFKYRGLFISEPAYIDSLETLAEGEGSQFYQLKKKANGELYANSDVISPEDFELLLKRNLDNIQRASAAILSGDFPLSPAEGSLQFTPFTDVLRFDRALGDQYKNNTPKNKSDILKLLKADEE.

Belongs to the helicase family. AddB/RexB type 2 subfamily. Heterodimer of AddA and RexB. Requires Mg(2+) as cofactor.

Its function is as follows. The heterodimer acts as both an ATP-dependent DNA helicase and an ATP-dependent, dual-direction single-stranded exonuclease. Recognizes the chi site generating a DNA molecule suitable for the initiation of homologous recombination. This subunit has 5' -&gt; 3' nuclease activity but not helicase activity. The chain is ATP-dependent helicase/deoxyribonuclease subunit B from Leuconostoc citreum (strain KM20).